Reading from the N-terminus, the 347-residue chain is Phosphoribosylformylglycinamidine cyclo-ligase (347 aa).

The protein belongs to the AIR synthase family.

It is found in the cytoplasm. The enzyme catalyses 2-formamido-N(1)-(5-O-phospho-beta-D-ribosyl)acetamidine + ATP = 5-amino-1-(5-phospho-beta-D-ribosyl)imidazole + ADP + phosphate + H(+). It participates in purine metabolism; IMP biosynthesis via de novo pathway; 5-amino-1-(5-phospho-D-ribosyl)imidazole from N(2)-formyl-N(1)-(5-phospho-D-ribosyl)glycinamide: step 2/2. This Alcanivorax borkumensis (strain ATCC 700651 / DSM 11573 / NCIMB 13689 / SK2) protein is Phosphoribosylformylglycinamidine cyclo-ligase.